Here is a 169-residue protein sequence, read N- to C-terminus: Peptide deformylase (169 aa).

Residues Cys91 and His133 each coordinate Fe cation. Glu134 is a catalytic residue. His137 contributes to the Fe cation binding site.

This sequence belongs to the polypeptide deformylase family. Requires Fe(2+) as cofactor.

It catalyses the reaction N-terminal N-formyl-L-methionyl-[peptide] + H2O = N-terminal L-methionyl-[peptide] + formate. Its function is as follows. Removes the formyl group from the N-terminal Met of newly synthesized proteins. Requires at least a dipeptide for an efficient rate of reaction. N-terminal L-methionine is a prerequisite for activity but the enzyme has broad specificity at other positions. In Hydrogenovibrio crunogenus (strain DSM 25203 / XCL-2) (Thiomicrospira crunogena), this protein is Peptide deformylase.